Reading from the N-terminus, the 107-residue chain is Probable monothiol glutaredoxin 2 (107 aa).

The Glutaredoxin domain maps to 7-107; the sequence is LEFIQNAIKK…LEKMLKDVVV (101 aa). Position 24 (Lys-24) interacts with glutathione. Cys-32 provides a ligand contact to [2Fe-2S] cluster. Residues Arg-61, Phe-73, and 86–87 contribute to the glutathione site; that span reads CD.

It belongs to the glutaredoxin family. Monothiol subfamily.

In Rickettsia prowazekii (strain Madrid E), this protein is Probable monothiol glutaredoxin 2 (grxC2).